The sequence spans 419 residues: UDP-arabinose 4-epimerase 1 (419 aa).

Positions 1–21 (MFSFGRARSQGRQNRSMSLGG) are disordered. Topologically, residues 1 to 32 (MFSFGRARSQGRQNRSMSLGGLDYADPKKKNN) are cytoplasmic. Residues 33–51 (YLGKILLTASLTALCIFML) traverse the membrane as a helical; Signal-anchor for type II membrane protein segment. The Lumenal segment spans residues 52–419 (KQSPTFNTPS…GLTTSSVSVY (368 aa)). 72-103 (HVLVTGGAGYIGSHAALRLLKESYRVTIVDNL) is a binding site for NAD(+). Tyr220 acts as the Proton acceptor in catalysis.

It belongs to the NAD(P)-dependent epimerase/dehydratase family. The cofactor is NAD(+). As to expression, high expression in roots. Also found in leaves, stems, flowers, and siliques.

It localises to the golgi apparatus. Its subcellular location is the golgi stack membrane. The enzyme catalyses UDP-beta-L-arabinopyranose = UDP-alpha-D-xylose. Its pathway is nucleotide-sugar biosynthesis; UDP-L-arabinose biosynthesis; UDP-L-arabinose from UDP-alpha-D-xylose: step 1/1. The protein operates within cell wall biogenesis; cell wall polysaccharide biosynthesis. Acts as a UDP-D-xylose 4-epimerase but lacks both UDP-D-glucose and UDP-D-glucuronic acid 4-epimerase activities in vitro. The protein is UDP-arabinose 4-epimerase 1 of Arabidopsis thaliana (Mouse-ear cress).